The primary structure comprises 759 residues: Secretin XpsD (759 aa).

The first 21 residues, 1 to 21 (MSERMTPRLFPVSLLIGLLAG), serve as a signal peptide directing secretion. Residue Cys22 is the site of N-palmitoyl cysteine attachment. Cys22 carries S-diacylglycerol cysteine lipidation. Low complexity predominate over residues 40–51 (VGAAGATQTTAE). Residues 40–69 (VGAAGATQTTAEQRADGNASAKPTPVIRRG) are disordered. Residues 92–187 (GSATFNFEGE…APSTASPSAA (96 aa)) form an N0 region. The tract at residues 189-253 (GFEVRVVPLK…VQIFDVDWLS (65 aa)) is N1. Positions 254–323 (GMSVGVFPIQ…IQQWLDRIDS (70 aa)) are N2. The segment at 326-474 (GGVRLFSYEL…SIRDVIEKLD (149 aa)) is N3. The interval 352-434 (GGRGNGGNSG…PPSTNQNGSV (83 aa)) is disordered. Residues 392–401 (ATGGDIGGTS) are compositionally biased toward gly residues. Polar residues predominate over residues 425-434 (PPSTNQNGSV). Residues 479–734 (QVHIEAQIAE…VLITPSIVRN (256 aa)) are secretin. A s domain region spans residues 736–759 (QDARDLTDEYGSKFKSMRPMDVHK).

This sequence belongs to the bacterial secretin family. GSP D subfamily. As to quaternary structure, forms a cylindrical channel with 15 subunits. Binds to XpsN.

The protein localises to the cell outer membrane. Involved in a type II secretion system (T2SS, formerly general secretion pathway, GSP) for the export of proteins. This subunit forms the outer membrane channel. The protein is Secretin XpsD (xpsD) of Xanthomonas campestris pv. campestris (strain ATCC 33913 / DSM 3586 / NCPPB 528 / LMG 568 / P 25).